The chain runs to 306 residues: D-alanine--D-alanine ligase (306 aa).

Residues 101–303 (KLLWQGAGLP…FSQLVVRILE (203 aa)) form the ATP-grasp domain. Position 134–189 (134–189 (ISALGLPLIVKPSREGSSVGMTKVVEENALQGALSLAFQHDDEILIEKWLCGPEFT)) interacts with ATP. The Mg(2+) site is built by aspartate 257, glutamate 270, and asparagine 272.

Belongs to the D-alanine--D-alanine ligase family. Mg(2+) serves as cofactor. Requires Mn(2+) as cofactor.

The protein resides in the cytoplasm. It carries out the reaction 2 D-alanine + ATP = D-alanyl-D-alanine + ADP + phosphate + H(+). The protein operates within cell wall biogenesis; peptidoglycan biosynthesis. Its function is as follows. Cell wall formation. In Salmonella paratyphi A (strain ATCC 9150 / SARB42), this protein is D-alanine--D-alanine ligase.